The following is a 276-amino-acid chain: NAD kinase (276 aa).

The active-site Proton acceptor is Asp61. Residues 61 to 62 (DG), 134 to 135 (ND), Arg145, Lys162, Asp164, Val172, 175 to 180 (TAYSFS), and Gln234 each bind NAD(+).

The protein belongs to the NAD kinase family. A divalent metal cation is required as a cofactor.

Its subcellular location is the cytoplasm. It catalyses the reaction NAD(+) + ATP = ADP + NADP(+) + H(+). In terms of biological role, involved in the regulation of the intracellular balance of NAD and NADP, and is a key enzyme in the biosynthesis of NADP. Catalyzes specifically the phosphorylation on 2'-hydroxyl of the adenosine moiety of NAD to yield NADP. In Clostridium perfringens (strain ATCC 13124 / DSM 756 / JCM 1290 / NCIMB 6125 / NCTC 8237 / Type A), this protein is NAD kinase.